Here is a 324-residue protein sequence, read N- to C-terminus: Ribosomal lysine N-methyltransferase 5 (324 aa).

Residues tryptophan 90, 140–142 (GSG), aspartate 162, tryptophan 217, and methionine 247 each bind S-adenosyl-L-methionine.

The protein belongs to the class I-like SAM-binding methyltransferase superfamily. RKM5 family.

Its function is as follows. S-adenosyl-L-methionine-dependent protein-lysine N-methyltransferase that methylates 60S ribosomal protein L1. This chain is Ribosomal lysine N-methyltransferase 5 (RKM5), found in Vanderwaltozyma polyspora (strain ATCC 22028 / DSM 70294 / BCRC 21397 / CBS 2163 / NBRC 10782 / NRRL Y-8283 / UCD 57-17) (Kluyveromyces polysporus).